The primary structure comprises 375 residues: Neuropeptide Y receptor type 4-2 (375 aa).

Residues 1-39 (MNTSHLLALLLPKSPQGENRSKPLGTPYNFSEHCQDSVD) lie on the Extracellular side of the membrane. Residues Asn-2, Asn-19, and Asn-29 are each glycosylated (N-linked (GlcNAc...) asparagine). Residues 40–60 (VMVFIVTSYSIETVVGVLGNL) form a helical membrane-spanning segment. Residues 61-87 (CLMCVTVRQKEKANVTNLLIANLAFSD) lie on the Cytoplasmic side of the membrane. The chain crosses the membrane as a helical span at residues 88–108 (FLMCLLCQPLTAVYTIMDYWI). Over 109 to 116 (FGETLCKM) the chain is Extracellular. Cys-114 and Cys-201 are joined by a disulfide. A helical transmembrane segment spans residues 117–137 (SAFIQCMSVTVSILSLVLVAL). Topologically, residues 138 to 155 (ERHQLIINPTGWKPSISQ) are cytoplasmic. The chain crosses the membrane as a helical span at residues 156-176 (AYLGIVLIWVIACVLSLPFLA). Over 177–212 (NSILENVFHKNHSKALEFLADKVVCTESWPLAHHRT) the chain is Extracellular. N-linked (GlcNAc...) asparagine glycosylation occurs at Asn-187. A helical membrane pass occupies residues 213 to 233 (IYTTFLLLFQYCLPLGFILVC). The Cytoplasmic segment spans residues 234 to 263 (YARIYRRLQRQGRVFHKGTYSLRAGHMKQV). A helical membrane pass occupies residues 264–284 (NVVLVVMVVAFAVLWLPLHVF). Residues 285–301 (NSLEDWHHEAIPICHGN) are Extracellular-facing. The chain crosses the membrane as a helical span at residues 302-322 (LIFLVCHLLAMASTCVNPFIY). The Cytoplasmic portion of the chain corresponds to 323–375 (GFLNTNFKKEIKALVLTCQQSAPLEESEHLPLSTVHTEVSKGSLRLSGRSNPI). A lipid anchor (S-palmitoyl cysteine) is attached at Cys-340.

It belongs to the G-protein coupled receptor 1 family.

The protein localises to the cell membrane. G protein-coupled receptor for PPY/pancreatic polypeptide/PP, NPY/neuropeptide Y and PYY/peptide YY that is negatively coupled to cAMP. The rank order of affinity for these polypeptides and their derivatives is PP, PP (2-36) and [Ile-31, Gln-34] PP &gt; [Pro-34] PYY &gt; PYY and [Leu-31, Pro-34] NPY &gt; NPY &gt; PYY (3-36) and NPY (2-36) &gt; PP (13-36) &gt; PP (31-36) &gt; NPY free acid. In Homo sapiens (Human), this protein is Neuropeptide Y receptor type 4-2.